A 341-amino-acid polypeptide reads, in one-letter code: Glycerol-3-phosphate dehydrogenase [NAD(P)+] (341 aa).

Residues Ser-14, Phe-15, Arg-35, and Lys-108 each contribute to the NADPH site. Residues Lys-108 and Gly-136 each coordinate sn-glycerol 3-phosphate. Ala-140 provides a ligand contact to NADPH. Residues Lys-191, Asp-244, Ser-254, Arg-255, and Asn-256 each coordinate sn-glycerol 3-phosphate. Residue Lys-191 is the Proton acceptor of the active site. Residue Arg-255 participates in NADPH binding. NADPH is bound by residues Val-279 and Glu-281.

Belongs to the NAD-dependent glycerol-3-phosphate dehydrogenase family.

Its subcellular location is the cytoplasm. The catalysed reaction is sn-glycerol 3-phosphate + NAD(+) = dihydroxyacetone phosphate + NADH + H(+). It carries out the reaction sn-glycerol 3-phosphate + NADP(+) = dihydroxyacetone phosphate + NADPH + H(+). It participates in membrane lipid metabolism; glycerophospholipid metabolism. Catalyzes the reduction of the glycolytic intermediate dihydroxyacetone phosphate (DHAP) to sn-glycerol 3-phosphate (G3P), the key precursor for phospholipid synthesis. The polypeptide is Glycerol-3-phosphate dehydrogenase [NAD(P)+] (Pseudomonas fluorescens (strain ATCC BAA-477 / NRRL B-23932 / Pf-5)).